Reading from the N-terminus, the 1119-residue chain is Ubiquitin-associated protein 2 (1119 aa).

Residues 1 to 26 (MMTSVSSDHCRGAREKPQISAAQSTQ) are disordered. Positions 8-17 (DHCRGAREKP) are enriched in basic and acidic residues. Residues 48–92 (KNDSDFEAKVKQLMEVTGKNQDECIVALHDCNGDVNKAINILLEG) form the UBA domain. Positions 105 to 130 (KKKNFAKENSENKENREKKSEKESSR) form a coiled coil. Residues 110–130 (AKENSENKENREKKSEKESSR) show a composition bias toward basic and acidic residues. Disordered regions lie at residues 110–202 (AKEN…YSDS), 385–476 (LGQF…SPST), 622–736 (VHNR…SSHQ), 853–905 (RDGS…VNPA), 937–966 (SAKQ…YSTG), 982–1020 (GGYA…GSVY), and 1082–1119 (HLPQ…YWTN). R166 carries the post-translational modification Omega-N-methylarginine. A compositionally biased stretch (basic residues) spans 168-182 (KRARGRGFGRGRGRG). A compositionally biased stretch (low complexity) spans 389–407 (TTTPSTQQNSTSHPTTTTS). 4 positions are modified to phosphoserine: S432, S439, S473, and S630. Residues 435-447 (LSQLSQRQQHQSQ) show a composition bias toward low complexity. A compositionally biased stretch (polar residues) spans 651–662 (SQQTLDTPKTTG). The segment covering 663-678 (PPSALPSVSSLPSTTS) has biased composition (low complexity). The span at 679 to 694 (CTALLPSTSQHTGDLT) shows a compositional bias: polar residues. Low complexity-rich tracts occupy residues 695–736 (SSPL…SSHQ) and 874–900 (SASP…AQQP). Over residues 943–957 (VNLSTPTPPFQQASG) the composition is skewed to polar residues. Composition is skewed to low complexity over residues 1002-1011 (GVSVSSSTTG) and 1088-1102 (QSGS…SLQP).

In terms of assembly, may interact with ANXA2.

It localises to the nucleus. It is found in the chromosome. The protein resides in the cytoplasm. Functionally, recruits the ubiquitination machinery to RNA polymerase II for polyubiquitination, removal and degradation, when the transcription-coupled nucleotide excision repair (TC-NER) machinery fails to resolve DNA damage. May promote the degradation of ANXA2. The polypeptide is Ubiquitin-associated protein 2 (Homo sapiens (Human)).